We begin with the raw amino-acid sequence, 618 residues long: UvrABC system protein C (618 aa).

Positions 20–98 (TAPGVYRMYA…IKSLSPRYNV (79 aa)) constitute a GIY-YIG domain. The UVR domain maps to 207 to 242 (DQLGEEIMQSMQQASEALEFERAARLRDLLSSLRSM).

It belongs to the UvrC family. Interacts with UvrB in an incision complex.

It localises to the cytoplasm. In terms of biological role, the UvrABC repair system catalyzes the recognition and processing of DNA lesions. UvrC both incises the 5' and 3' sides of the lesion. The N-terminal half is responsible for the 3' incision and the C-terminal half is responsible for the 5' incision. This chain is UvrABC system protein C, found in Xanthomonas oryzae pv. oryzae (strain MAFF 311018).